We begin with the raw amino-acid sequence, 60 residues long: Large ribosomal subunit protein bL33 (60 aa).

The protein belongs to the bacterial ribosomal protein bL33 family.

In Chlorobaculum tepidum (strain ATCC 49652 / DSM 12025 / NBRC 103806 / TLS) (Chlorobium tepidum), this protein is Large ribosomal subunit protein bL33.